Here is a 148-residue protein sequence, read N- to C-terminus: UPF0756 membrane protein YeaL (148 aa).

4 helical membrane passes run 14 to 34 (ALGF…LIIV), 51 to 71 (LSIG…SGTL), 86 to 106 (LVAI…VTLM), and 121 to 141 (VLGV…AGLV).

Belongs to the UPF0756 family.

It localises to the cell membrane. The polypeptide is UPF0756 membrane protein YeaL (Escherichia coli (strain B / REL606)).